The primary structure comprises 326 residues: tRNA-dihydrouridine(20a/20b) synthase [NAD(P)+] (326 aa).

Residues 26 to 28 and glutamine 79 contribute to the FMN site; that span reads PMV. The active-site Proton donor is the cysteine 108. FMN-binding positions include lysine 149, histidine 177, 208–210, and 232–233; these read NGD and AR.

Belongs to the Dus family. Dus4 subfamily. FMN is required as a cofactor.

The protein localises to the mitochondrion. It catalyses the reaction 5,6-dihydrouridine(20a) in tRNA + NADP(+) = uridine(20a) in tRNA + NADPH + H(+). The catalysed reaction is 5,6-dihydrouridine(20a) in tRNA + NAD(+) = uridine(20a) in tRNA + NADH + H(+). The enzyme catalyses 5,6-dihydrouridine(20b) in tRNA + NAD(+) = uridine(20b) in tRNA + NADH + H(+). It carries out the reaction 5,6-dihydrouridine(20b) in tRNA + NADP(+) = uridine(20b) in tRNA + NADPH + H(+). It catalyses the reaction a 5,6-dihydrouridine in mRNA + NAD(+) = a uridine in mRNA + NADH + H(+). The catalysed reaction is a 5,6-dihydrouridine in mRNA + NADP(+) = a uridine in mRNA + NADPH + H(+). In terms of biological role, catalyzes the synthesis of dihydrouridine, a modified base found in the D-loop of most tRNAs. Also able to mediate dihydrouridylation of some mRNAs, thereby affecting their translation. The sequence is that of tRNA-dihydrouridine(20a/20b) synthase [NAD(P)+] from Schizosaccharomyces pombe (strain 972 / ATCC 24843) (Fission yeast).